The chain runs to 127 residues: Phosphoribosyl-ATP pyrophosphatase (127 aa).

The protein belongs to the PRA-PH family.

The protein resides in the cytoplasm. The enzyme catalyses 1-(5-phospho-beta-D-ribosyl)-ATP + H2O = 1-(5-phospho-beta-D-ribosyl)-5'-AMP + diphosphate + H(+). The protein operates within amino-acid biosynthesis; L-histidine biosynthesis; L-histidine from 5-phospho-alpha-D-ribose 1-diphosphate: step 2/9. This chain is Phosphoribosyl-ATP pyrophosphatase, found in Polaromonas sp. (strain JS666 / ATCC BAA-500).